Consider the following 668-residue polypeptide: DNA ligase (668 aa).

NAD(+) is bound by residues 34–38 (DAEYD), 83–84 (SL), and glutamate 117. Lysine 119 functions as the N6-AMP-lysine intermediate in the catalytic mechanism. Positions 140, 177, 293, and 317 each coordinate NAD(+). Cysteine 411, cysteine 414, cysteine 429, and cysteine 434 together coordinate Zn(2+). A BRCT domain is found at 591–668 (RVGGRFTGKT…SEDDFLELMQ (78 aa)).

The protein belongs to the NAD-dependent DNA ligase family. LigA subfamily. The cofactor is Mg(2+). Mn(2+) is required as a cofactor.

It catalyses the reaction NAD(+) + (deoxyribonucleotide)n-3'-hydroxyl + 5'-phospho-(deoxyribonucleotide)m = (deoxyribonucleotide)n+m + AMP + beta-nicotinamide D-nucleotide.. Functionally, DNA ligase that catalyzes the formation of phosphodiester linkages between 5'-phosphoryl and 3'-hydroxyl groups in double-stranded DNA using NAD as a coenzyme and as the energy source for the reaction. It is essential for DNA replication and repair of damaged DNA. The sequence is that of DNA ligase from Citrifermentans bemidjiense (strain ATCC BAA-1014 / DSM 16622 / JCM 12645 / Bem) (Geobacter bemidjiensis).